The following is a 346-amino-acid chain: MDENKKRALAAALGQIERQFGKGAVMRMGDHERQAIPAISTGSLGLDIALGIGGLPKGRIVEIYGPESSGKTTLTLSVIAEAQKQGATCAFVDAEHALDPDYAGKLGVNVDDLLVSQPDTGEQALEITDMLVRSNAVDVIIVDSVAALVPKAEIEGEMGDAHVGLQARLMSQALRKITGNIKNANCLVIFINQIRMKIGVMFGNPETTTGGNALKFYASVRLDIRRTGAVKEGDEVVGSETRVKVVKNKVSPPFRQAEFQILYGKGIYRTGEIIDLGVQLGLVEKSGAWYSYQGSKIGQGKANAAKYLEDNPEIGSVLEKTIRDQLLAKSGPVKADAEEVADAEAD.

65-72 (GPESSGKT) is an ATP binding site.

This sequence belongs to the RecA family.

The protein localises to the cytoplasm. Can catalyze the hydrolysis of ATP in the presence of single-stranded DNA, the ATP-dependent uptake of single-stranded DNA by duplex DNA, and the ATP-dependent hybridization of homologous single-stranded DNAs. It interacts with LexA causing its activation and leading to its autocatalytic cleavage. This chain is Protein RecA, found in Pseudomonas aeruginosa (strain UCBPP-PA14).